The chain runs to 85 residues: Probable oxaloacetate decarboxylase gamma chain (85 aa).

Residues 11 to 33 (AAALMVTGMGVVFIFLTILIFLV) traverse the membrane as a helical segment.

Belongs to the OadG family. As to quaternary structure, heterotrimer of an alpha, a beta and a gamma subunit. Na(+) serves as cofactor.

The protein localises to the cell membrane. The catalysed reaction is oxaloacetate + 2 Na(+)(in) + H(+) = pyruvate + 2 Na(+)(out) + CO2. Its function is as follows. Catalyzes the decarboxylation of oxaloacetate coupled to Na(+) translocation. In Vibrio vulnificus (strain CMCP6), this protein is Probable oxaloacetate decarboxylase gamma chain.